Here is a 126-residue protein sequence, read N- to C-terminus: Large ribosomal subunit protein bL12 (126 aa).

The protein belongs to the bacterial ribosomal protein bL12 family. Homodimer. Part of the ribosomal stalk of the 50S ribosomal subunit. Forms a multimeric L10(L12)X complex, where L10 forms an elongated spine to which 2 to 4 L12 dimers bind in a sequential fashion. Binds GTP-bound translation factors.

Forms part of the ribosomal stalk which helps the ribosome interact with GTP-bound translation factors. Is thus essential for accurate translation. This chain is Large ribosomal subunit protein bL12, found in Acidovorax ebreus (strain TPSY) (Diaphorobacter sp. (strain TPSY)).